A 225-amino-acid polypeptide reads, in one-letter code: Non-structural protein V (225 aa).

Residues 145 to 157 are compositionally biased toward polar residues; that stretch reads SGPSLTDQASSKD. The tract at residues 145-172 is disordered; sequence SGPSLTDQASSKDPNFKRGGEIDGRHKG. A compositionally biased stretch (basic and acidic residues) spans 158 to 169; it reads PNFKRGGEIDGR. H174, C193, C197, C209, C211, C214, C218, and C221 together coordinate Zn(2+).

The protein belongs to the paramyxoviruses V protein family.

It is found in the host cytoplasm. Plays an essential role in the inhibition of host immune response. Prevents the establishment of cellular antiviral state by blocking interferon-alpha/beta (IFN-alpha/beta) production and signaling pathway. Interacts with host IFIH1/MDA5 and DHX58/LGP2 to inhibit the transduction pathway involved in the activation of IFN-beta promoter, thus protecting the virus against cell antiviral state. Efficiently blocks type I and type II IFN signaling following infection, probably by targeting host STAT1 for proteasomal degradation. The polypeptide is Non-structural protein V (P/V) (Simian virus 41 (SV41)).